Reading from the N-terminus, the 120-residue chain is Ribonuclease P protein component 2 (120 aa).

The protein belongs to the eukaryotic/archaeal RNase P protein component 2 family. Homodimer in solution. Component of RNase P which consists of a catalytic RNA component and at least 5 protein subunits. Forms a heterotetrameric subcomplex with Rnp3. Reconstituted enzyme missing individual protein subunits is suboptimally active, showing each subunit contributes to optimization of activity.

It is found in the cytoplasm. The enzyme catalyses Endonucleolytic cleavage of RNA, removing 5'-extranucleotides from tRNA precursor.. Its function is as follows. Part of ribonuclease P, a protein complex that generates mature tRNA molecules by cleaving their 5'-ends. This Pyrococcus horikoshii (strain ATCC 700860 / DSM 12428 / JCM 9974 / NBRC 100139 / OT-3) protein is Ribonuclease P protein component 2.